Here is a 365-residue protein sequence, read N- to C-terminus: Protein RecA (365 aa).

76-83 (GPESSGKT) is an ATP binding site. A disordered region spans residues 346–365 (DVPGSERDGDEDAGDMEASA). The segment covering 353–365 (DGDEDAGDMEASA) has biased composition (acidic residues).

This sequence belongs to the RecA family.

It is found in the cytoplasm. Functionally, can catalyze the hydrolysis of ATP in the presence of single-stranded DNA, the ATP-dependent uptake of single-stranded DNA by duplex DNA, and the ATP-dependent hybridization of homologous single-stranded DNAs. It interacts with LexA causing its activation and leading to its autocatalytic cleavage. The polypeptide is Protein RecA (Parvibaculum lavamentivorans (strain DS-1 / DSM 13023 / NCIMB 13966)).